The chain runs to 194 residues: Large ribosomal subunit protein bL9 (194 aa).

The interval 167 to 194 is disordered; that stretch reads EDRAAEAEAASDMAAGGAGSFEGDHYES.

Belongs to the bacterial ribosomal protein bL9 family.

Functionally, binds to the 23S rRNA. The polypeptide is Large ribosomal subunit protein bL9 (Caulobacter sp. (strain K31)).